The following is a 369-amino-acid chain: Chorismate synthase (369 aa).

NADP(+) contacts are provided by arginine 48 and arginine 54. FMN contacts are provided by residues 125–127, 238–239, glycine 278, 293–297, and arginine 319; these read RSS, NA, and KPTSS.

This sequence belongs to the chorismate synthase family. In terms of assembly, homotetramer. FMNH2 serves as cofactor.

It carries out the reaction 5-O-(1-carboxyvinyl)-3-phosphoshikimate = chorismate + phosphate. It functions in the pathway metabolic intermediate biosynthesis; chorismate biosynthesis; chorismate from D-erythrose 4-phosphate and phosphoenolpyruvate: step 7/7. Functionally, catalyzes the anti-1,4-elimination of the C-3 phosphate and the C-6 proR hydrogen from 5-enolpyruvylshikimate-3-phosphate (EPSP) to yield chorismate, which is the branch point compound that serves as the starting substrate for the three terminal pathways of aromatic amino acid biosynthesis. This reaction introduces a second double bond into the aromatic ring system. This chain is Chorismate synthase, found in Burkholderia mallei (strain ATCC 23344).